Consider the following 486-residue polypeptide: Histone acetyltransferase type B catalytic subunit DDB_G0274269 (486 aa).

Residues 27–69 (DIEELKNKDNKENKDKENKAHIKDEGEEEEQKEKKEEEEKEDD) adopt a coiled-coil conformation. Basic and acidic residues predominate over residues 33–50 (NKDNKENKDKENKAHIKD). The interval 33-78 (NKDNKENKDKENKAHIKDEGEEEEQKEKKEEEEKEDDGGPISFHPT) is disordered. The N-acetyltransferase domain occupies 189–386 (VVFRYHEKLQ…YRISIKKRLY (198 aa)). Acetyl-CoA is bound by residues 260–262 (YLI) and 267–273 (QRMGHGK). The Proton donor/acceptor role is filled by Glu299. Residues 392–481 (DSEQIEKIKQ…KNYHKTLSSL (90 aa)) adopt a coiled-coil conformation.

Belongs to the HAT1 family.

The catalysed reaction is L-lysyl-[protein] + acetyl-CoA = N(6)-acetyl-L-lysyl-[protein] + CoA + H(+). In Dictyostelium discoideum (Social amoeba), this protein is Histone acetyltransferase type B catalytic subunit DDB_G0274269.